The primary structure comprises 131 residues: Putative gamma-taxilin 2 (131 aa).

The protein belongs to the taxilin family.

This chain is Putative gamma-taxilin 2 (TXLNGY), found in Pan troglodytes (Chimpanzee).